A 284-amino-acid chain; its full sequence is L-ribulose-5-phosphate 3-epimerase UlaE (284 aa).

Belongs to the L-ribulose-5-phosphate 3-epimerase family.

The enzyme catalyses L-ribulose 5-phosphate = L-xylulose 5-phosphate. It functions in the pathway cofactor degradation; L-ascorbate degradation; D-xylulose 5-phosphate from L-ascorbate: step 3/4. Functionally, catalyzes the isomerization of L-xylulose-5-phosphate to L-ribulose-5-phosphate. Is involved in the anaerobic L-ascorbate utilization. This is L-ribulose-5-phosphate 3-epimerase UlaE from Salmonella heidelberg (strain SL476).